The primary structure comprises 307 residues: Methionyl-tRNA formyltransferase (307 aa).

Residue Ser110 to Pro113 participates in (6S)-5,6,7,8-tetrahydrofolate binding.

The protein belongs to the Fmt family.

The enzyme catalyses L-methionyl-tRNA(fMet) + (6R)-10-formyltetrahydrofolate = N-formyl-L-methionyl-tRNA(fMet) + (6S)-5,6,7,8-tetrahydrofolate + H(+). Functionally, attaches a formyl group to the free amino group of methionyl-tRNA(fMet). The formyl group appears to play a dual role in the initiator identity of N-formylmethionyl-tRNA by promoting its recognition by IF2 and preventing the misappropriation of this tRNA by the elongation apparatus. The chain is Methionyl-tRNA formyltransferase from Rhodococcus erythropolis (strain PR4 / NBRC 100887).